The sequence spans 131 residues: Small ribosomal subunit protein uS8 (131 aa).

It belongs to the universal ribosomal protein uS8 family. As to quaternary structure, part of the 30S ribosomal subunit. Contacts proteins S5 and S12.

Its function is as follows. One of the primary rRNA binding proteins, it binds directly to 16S rRNA central domain where it helps coordinate assembly of the platform of the 30S subunit. In Campylobacter jejuni subsp. jejuni serotype O:23/36 (strain 81-176), this protein is Small ribosomal subunit protein uS8.